Here is a 511-residue protein sequence, read N- to C-terminus: Potassium voltage-gated channel subfamily A member 10 (511 aa).

The tract at residues 25–44 (EPGYATDFDPTSSKGRPGSS) is disordered. Residues 218–238 (VAVVSVLVVVISITIFCLETL) traverse the membrane as a helical segment. The chain crosses the membrane as a helical span at residues 271-292 (FFMVESTCIVWFTFELVLRFVV). Cys293 is lipidated: S-palmitoyl cysteine. Residues 303-323 (IMNIIDIISIIPYFATLITEL) traverse the membrane as a helical segment. A helical; Voltage-sensor transmembrane segment spans residues 339 to 358 (ILRIIRLVRVFRIFKLSRHS). The helical transmembrane segment at 375-395 (LGLLIFFLFIGVILFSSAVYF) threads the bilayer. Positions 421–426 (TVGYGD) match the Selectivity filter motif. Residues 436–456 (IVGTLCAIAGVLTIALPVPVI) form a helical membrane-spanning segment. Residues 489 to 511 (SRMGSTESLNKTNGSCSAEKSRK) form a disordered region.

The protein belongs to the potassium channel family. A (Shaker) (TC 1.A.1.2) subfamily. Kv1.8/KCNA10 sub-subfamily. Homotetramer. Interacts with KCN4B/POMP. Interaction with KCN4B/POMP is necessary for the modulation of channel activity by cAMP. In terms of tissue distribution, expressed strongly in the inner ear and weakly in skeletal muscle. Not detected in other tissues.

It is found in the membrane. It carries out the reaction K(+)(in) = K(+)(out). Its activity is regulated as follows. The channel activity is up-regulated by cAMP. In terms of biological role, voltage-gated potassium ion channel that mediates K(+) permeability of excitable membranes. When opened in response to the voltage difference across the membrane, KCNA10 channel selectively allows the flow of potassium ions across the membrane down their electrochemical gradient. The protein is Potassium voltage-gated channel subfamily A member 10 of Mus musculus (Mouse).